The chain runs to 258 residues: Thymidylate synthase (258 aa).

Arg-21 contacts dUMP. His-51 is a (6R)-5,10-methylene-5,6,7,8-tetrahydrofolate binding site. 121-122 (RR) serves as a coordination point for dUMP. Cys-141 acts as the Nucleophile in catalysis. Residues 161 to 164 (RSAD), Asn-172, and 202 to 204 (HLY) contribute to the dUMP site. Asp-164 is a (6R)-5,10-methylene-5,6,7,8-tetrahydrofolate binding site. Position 257 (Ala-257) interacts with (6R)-5,10-methylene-5,6,7,8-tetrahydrofolate.

Belongs to the thymidylate synthase family. Bacterial-type ThyA subfamily. In terms of assembly, homodimer.

The protein resides in the cytoplasm. It carries out the reaction dUMP + (6R)-5,10-methylene-5,6,7,8-tetrahydrofolate = 7,8-dihydrofolate + dTMP. It functions in the pathway pyrimidine metabolism; dTTP biosynthesis. In terms of biological role, catalyzes the reductive methylation of 2'-deoxyuridine-5'-monophosphate (dUMP) to 2'-deoxythymidine-5'-monophosphate (dTMP) while utilizing 5,10-methylenetetrahydrofolate (mTHF) as the methyl donor and reductant in the reaction, yielding dihydrofolate (DHF) as a by-product. This enzymatic reaction provides an intracellular de novo source of dTMP, an essential precursor for DNA biosynthesis. This Dichelobacter nodosus (strain VCS1703A) protein is Thymidylate synthase.